A 178-amino-acid polypeptide reads, in one-letter code: Large ribosomal subunit protein uL6 (178 aa).

This sequence belongs to the universal ribosomal protein uL6 family. In terms of assembly, part of the 50S ribosomal subunit.

Functionally, this protein binds to the 23S rRNA, and is important in its secondary structure. It is located near the subunit interface in the base of the L7/L12 stalk, and near the tRNA binding site of the peptidyltransferase center. The chain is Large ribosomal subunit protein uL6 from Corynebacterium kroppenstedtii (strain DSM 44385 / JCM 11950 / CIP 105744 / CCUG 35717).